A 342-amino-acid polypeptide reads, in one-letter code: Ferredoxin--NADP reductase (342 aa).

The FAD site is built by Cys17, Asp36, Gln44, Tyr49, Val89, Phe124, Asp289, and Thr330.

The protein belongs to the ferredoxin--NADP reductase type 2 family. Homodimer. It depends on FAD as a cofactor.

It carries out the reaction 2 reduced [2Fe-2S]-[ferredoxin] + NADP(+) + H(+) = 2 oxidized [2Fe-2S]-[ferredoxin] + NADPH. This Nitrobacter hamburgensis (strain DSM 10229 / NCIMB 13809 / X14) protein is Ferredoxin--NADP reductase.